The sequence spans 246 residues: 14-3-3 protein eta (246 aa).

Gly2 bears the N-acetylglycine mark. 2 positions are modified to phosphoserine: Ser25 and Ser59.

This sequence belongs to the 14-3-3 family. Homodimer. Interacts with many nuclear hormone receptors and cofactors including AR, ESR1, ESR2, MC2R, NR3C1, NRIP1, PPARBP and THRA. Interacts with ABL1 (phosphorylated form); the interaction retains it in the cytoplasm. Interacts with ARHGEF28 and CDK16. Weakly interacts with CDKN1B. Interacts with GAB2. Interacts with KCNK18 in a phosphorylation-dependent manner. Interacts with SAMSN1. Interacts with the 'Ser-241' phosphorylated form of PDPK1. Interacts with the 'Thr-369' phosphorylated form of DAPK2. Interacts with PI4KB, TBC1D22A and TBC1D22B. Interacts with SLITRK1. Interacts with MEFV. Phosphorylated on Ser-59 by protein kinase C delta type catalytic subunit in a sphingosine-dependent fashion. As to expression, expressed mainly in the brain and present in other tissues albeit at lower levels.

Its function is as follows. Adapter protein implicated in the regulation of a large spectrum of both general and specialized signaling pathways. Binds to a large number of partners, usually by recognition of a phosphoserine or phosphothreonine motif. Binding generally results in the modulation of the activity of the binding partner. Negatively regulates the kinase activity of PDPK1. In Homo sapiens (Human), this protein is 14-3-3 protein eta (YWHAH).